Consider the following 408-residue polypeptide: Argininosuccinate synthase (408 aa).

ATP is bound by residues 10–18 (AYSGGLDTS) and Ala-37. The L-citrulline site is built by Tyr-90 and Ser-95. Residue Gly-120 participates in ATP binding. 3 residues coordinate L-aspartate: Thr-122, Asn-126, and Asp-127. Asn-126 is an L-citrulline binding site. Positions 130, 181, 190, 266, and 278 each coordinate L-citrulline.

The protein belongs to the argininosuccinate synthase family. Type 1 subfamily. As to quaternary structure, homotetramer.

Its subcellular location is the cytoplasm. It catalyses the reaction L-citrulline + L-aspartate + ATP = 2-(N(omega)-L-arginino)succinate + AMP + diphosphate + H(+). It functions in the pathway amino-acid biosynthesis; L-arginine biosynthesis; L-arginine from L-ornithine and carbamoyl phosphate: step 2/3. This chain is Argininosuccinate synthase, found in Laribacter hongkongensis (strain HLHK9).